Here is a 149-residue protein sequence, read N- to C-terminus: Arginine repressor (149 aa).

Belongs to the ArgR family.

It is found in the cytoplasm. The protein operates within amino-acid biosynthesis; L-arginine biosynthesis [regulation]. In terms of biological role, regulates arginine biosynthesis genes. The chain is Arginine repressor from Geobacillus thermodenitrificans (strain NG80-2).